Here is a 519-residue protein sequence, read N- to C-terminus: Histidine ammonia-lyase (519 aa).

The 5-imidazolinone (Ala-Gly) cross-link spans 146-148; it reads ASG. 2,3-didehydroalanine (Ser) is present on serine 147.

This sequence belongs to the PAL/histidase family. Post-translationally, contains an active site 4-methylidene-imidazol-5-one (MIO), which is formed autocatalytically by cyclization and dehydration of residues Ala-Ser-Gly.

The protein resides in the cytoplasm. It carries out the reaction L-histidine = trans-urocanate + NH4(+). The protein operates within amino-acid degradation; L-histidine degradation into L-glutamate; N-formimidoyl-L-glutamate from L-histidine: step 1/3. The chain is Histidine ammonia-lyase from Psychrobacter sp. (strain PRwf-1).